The sequence spans 218 residues: MPGVVFDLDGTLVHSAPDIHAAVNKALAEEGGAPFTLAEITGFIGNGVPVLIQRVLAARGEAPDAHRQAELQGRFMAHYEADPATLTSVYPGAEAAIRHLRAEGWRIGLCTNKPVGASRQILSLFGLLELFDAIIGGDSLPQRKPDPAPLRATAAALNEEVVLYVGDSEVDAATAEAAGLRFALFTEGYRHAPVHELPHHGLFSHHDELPDLLRRLLA.

Aspartate 7 acts as the Nucleophile in catalysis. Mg(2+) contacts are provided by aspartate 7, aspartate 9, and aspartate 167.

Belongs to the HAD-like hydrolase superfamily. CbbY/CbbZ/Gph/YieH family. The cofactor is Mg(2+).

It carries out the reaction 2-phosphoglycolate + H2O = glycolate + phosphate. Its pathway is organic acid metabolism; glycolate biosynthesis; glycolate from 2-phosphoglycolate: step 1/1. In terms of biological role, specifically catalyzes the dephosphorylation of 2-phosphoglycolate. Is involved in the dissimilation of the intracellular 2-phosphoglycolate formed during the DNA repair of 3'-phosphoglycolate ends, a major class of DNA lesions induced by oxidative stress. This chain is Phosphoglycolate phosphatase, found in Cereibacter sphaeroides (strain ATCC 17029 / ATH 2.4.9) (Rhodobacter sphaeroides).